A 360-amino-acid polypeptide reads, in one-letter code: MASNGMASSPSSFFPPNFLLHMAQQQAAPPHDPQEHHHHHHHGHHHEQQQHHHHLGPPPPPPPHPHNPFLPSSAQCPSLQEFRGMAPMLGKRPMSYGDGGGGGDEVNGGGEDELSDDGSQAGEKKRRLNVEQVRTLEKNFELGNKLEPERKMQLARALGLQPRQVAIWFQNRRARWKTKQLEKDYDALKRQLDAVKAENDALLNHNKKLQAEIVALKGREAASELINLNKETEASCSNRSENSSEINLDISRTPPPDAAALDAAPTAHHHHHGGGGGGGGGGGMIPFYTSIARPASGGGVDIDQLLHSSSGGAGGPKMEHHGGGGNVQAASVDTASFGNLLCGVDEPPPFWPWPDHQHFH.

Disordered regions lie at residues 25-75 (QQAA…SSAQ) and 88-126 (MLGK…EKKR). Basic residues predominate over residues 36–55 (HHHHHHHGHHHEQQQHHHHL). Pro residues predominate over residues 56 to 68 (GPPPPPPPHPHNP). Residues 97–109 (GDGGGGGDEVNGG) show a composition bias toward gly residues. The homeobox DNA-binding region spans 121–180 (AGEKKRRLNVEQVRTLEKNFELGNKLEPERKMQLARALGLQPRQVAIWFQNRRARWKTKQ). Residues 179–223 (KQLEKDYDALKRQLDAVKAENDALLNHNKKLQAEIVALKGREAAS) are leucine-zipper. Disordered stretches follow at residues 233–278 (EASC…GGGG) and 299–328 (GVDI…GNVQ). Residues 234–246 (ASCSNRSENSSEI) are compositionally biased toward polar residues.

This sequence belongs to the HD-ZIP homeobox family. Class I subfamily. In terms of tissue distribution, expressed in seedlings, roots, stems, leaf blades and panicles.

The protein localises to the nucleus. Probable transcription factor. The polypeptide is Homeobox-leucine zipper protein HOX21 (HOX21) (Oryza sativa subsp. indica (Rice)).